The primary structure comprises 170 residues: Ribosome maturation factor RimM (170 aa).

Residues 95–168 (EDAYYYHEIV…IIKVQLMEGM (74 aa)) enclose the PRC barrel domain.

Belongs to the RimM family. Binds ribosomal protein uS19.

It is found in the cytoplasm. An accessory protein needed during the final step in the assembly of 30S ribosomal subunit, possibly for assembly of the head region. Essential for efficient processing of 16S rRNA. May be needed both before and after RbfA during the maturation of 16S rRNA. It has affinity for free ribosomal 30S subunits but not for 70S ribosomes. This is Ribosome maturation factor RimM from Oceanobacillus iheyensis (strain DSM 14371 / CIP 107618 / JCM 11309 / KCTC 3954 / HTE831).